Here is a 246-residue protein sequence, read N- to C-terminus: Aquaporin AqpM (246 aa).

At 1–11 the chain is on the cytoplasmic side; sequence MVSLTKRCIAE. A helical transmembrane segment spans residues 12–32; the sequence is FIGTFILVFFGAGSAAVTLMI. Over 33–55 the chain is Extracellular; sequence ASGGTSPNPFNIGIGLLGGLGDW. Residues 56–76 form a helical membrane-spanning segment; the sequence is VAIGLAFGFAIAASIYALGNI. At 77-103 the chain is on the cytoplasmic side; sequence SGCHINPAVTIGLWSVKKFPGREVVPY. Residues 82–84 carry the NPA 1 motif; that stretch reads NPA. Residues 104–124 form a helical membrane-spanning segment; the sequence is IIAQLLGAAFGSFIFLQCAGI. Residues 125 to 145 lie on the Extracellular side of the membrane; sequence GAATVGGLGATAPFPGISYWQ. A helical membrane pass occupies residues 146-166; that stretch reads AMLAEVVGTFLLMITIMGIAV. Over 167-172 the chain is Cytoplasmic; that stretch reads DERAPK. Residues 173 to 193 form a helical membrane-spanning segment; sequence GFAGIIIGLTVAGIITTLGNI. Over 194–217 the chain is Extracellular; sequence SGSSLNPARTFGPYLNDMIFAGTN. The NPA 2 motif lies at 199 to 201; that stretch reads NPA. A helical transmembrane segment spans residues 218 to 238; it reads LWNYYPIYVIGPIVGAVLAAL. The Cytoplasmic segment spans residues 239 to 246; the sequence is TYQYLTSE.

It belongs to the MIP/aquaporin (TC 1.A.8) family. Homotetramer.

The protein localises to the cell membrane. In terms of biological role, channel that permits osmotically driven movement of water in both directions. It mediates rapid entry or exit of water in response to abrupt changes in osmolarity. Also exhibits a transient but reproducible increase in the initial glycerol flux. The chain is Aquaporin AqpM (aqpM) from Methanothermobacter marburgensis (strain ATCC BAA-927 / DSM 2133 / JCM 14651 / NBRC 100331 / OCM 82 / Marburg) (Methanobacterium thermoautotrophicum).